Here is a 266-residue protein sequence, read N- to C-terminus: Putative carbamate hydrolase RutD (266 aa).

Belongs to the AB hydrolase superfamily. Hydrolase RutD family.

It carries out the reaction carbamate + 2 H(+) = NH4(+) + CO2. Involved in pyrimidine catabolism. May facilitate the hydrolysis of carbamate, a reaction that can also occur spontaneously. In Escherichia coli O26:H11 (strain 11368 / EHEC), this protein is Putative carbamate hydrolase RutD.